The sequence spans 398 residues: 4-hydroxy-3-methylbut-2-enyl diphosphate reductase (398 aa).

Cysteine 66 serves as a coordination point for [4Fe-4S] cluster. Histidine 96 contacts (2E)-4-hydroxy-3-methylbut-2-enyl diphosphate. Residue histidine 96 coordinates dimethylallyl diphosphate. An isopentenyl diphosphate-binding site is contributed by histidine 96. Cysteine 157 lines the [4Fe-4S] cluster pocket. Histidine 185 lines the (2E)-4-hydroxy-3-methylbut-2-enyl diphosphate pocket. Histidine 185 is a binding site for dimethylallyl diphosphate. Isopentenyl diphosphate is bound at residue histidine 185. The Proton donor role is filled by glutamate 187. Position 250 (threonine 250) interacts with (2E)-4-hydroxy-3-methylbut-2-enyl diphosphate. Residue cysteine 288 participates in [4Fe-4S] cluster binding. Serine 317, serine 318, asparagine 319, and serine 380 together coordinate (2E)-4-hydroxy-3-methylbut-2-enyl diphosphate. Dimethylallyl diphosphate contacts are provided by serine 317, serine 318, asparagine 319, and serine 380. Serine 317, serine 318, asparagine 319, and serine 380 together coordinate isopentenyl diphosphate.

It belongs to the IspH family. Requires [4Fe-4S] cluster as cofactor.

It catalyses the reaction isopentenyl diphosphate + 2 oxidized [2Fe-2S]-[ferredoxin] + H2O = (2E)-4-hydroxy-3-methylbut-2-enyl diphosphate + 2 reduced [2Fe-2S]-[ferredoxin] + 2 H(+). The catalysed reaction is dimethylallyl diphosphate + 2 oxidized [2Fe-2S]-[ferredoxin] + H2O = (2E)-4-hydroxy-3-methylbut-2-enyl diphosphate + 2 reduced [2Fe-2S]-[ferredoxin] + 2 H(+). The protein operates within isoprenoid biosynthesis; dimethylallyl diphosphate biosynthesis; dimethylallyl diphosphate from (2E)-4-hydroxy-3-methylbutenyl diphosphate: step 1/1. It functions in the pathway isoprenoid biosynthesis; isopentenyl diphosphate biosynthesis via DXP pathway; isopentenyl diphosphate from 1-deoxy-D-xylulose 5-phosphate: step 6/6. In terms of biological role, catalyzes the conversion of 1-hydroxy-2-methyl-2-(E)-butenyl 4-diphosphate (HMBPP) into a mixture of isopentenyl diphosphate (IPP) and dimethylallyl diphosphate (DMAPP). Acts in the terminal step of the DOXP/MEP pathway for isoprenoid precursor biosynthesis. The polypeptide is 4-hydroxy-3-methylbut-2-enyl diphosphate reductase (Prochlorococcus marinus (strain MIT 9301)).